A 619-amino-acid chain; its full sequence is ATP-dependent zinc metalloprotease FtsH (619 aa).

At 1–5 (MKYFK) the chain is on the cytoplasmic side. The chain crosses the membrane as a helical span at residues 6–26 (GISFYIIIFILILVIITFFTA). The Extracellular portion of the chain corresponds to 27–110 (TDNPPKMSYS…VTQPPQPPWW (84 aa)). Residues 111–131 (VSMLPTVGLVIILILIWFFFI) traverse the membrane as a helical segment. The Cytoplasmic portion of the chain corresponds to 132–619 (QQSQGGGGGN…GSSQTPQLEG (488 aa)). Position 204–211 (204–211 (GPPGTGKT)) interacts with ATP. Position 426 (His-426) interacts with Zn(2+). The active site involves Glu-427. Zn(2+) is bound by residues His-430 and Asp-502.

It in the central section; belongs to the AAA ATPase family. In the C-terminal section; belongs to the peptidase M41 family. As to quaternary structure, homohexamer. Zn(2+) is required as a cofactor.

The protein resides in the cell membrane. In terms of biological role, acts as a processive, ATP-dependent zinc metallopeptidase for both cytoplasmic and membrane proteins. Plays a role in the quality control of integral membrane proteins. The protein is ATP-dependent zinc metalloprotease FtsH of Ruminiclostridium cellulolyticum (strain ATCC 35319 / DSM 5812 / JCM 6584 / H10) (Clostridium cellulolyticum).